The following is a 340-amino-acid chain: Anthranilate phosphoribosyltransferase (340 aa).

5-phospho-alpha-D-ribose 1-diphosphate-binding positions include Gly83, 86-87, Thr91, 93-96, 111-119, and Ser123; these read GD, NVST, and KHGNRSVSS. Gly83 is a binding site for anthranilate. A Mg(2+)-binding site is contributed by Ser95. Asn114 contacts anthranilate. Arg169 contributes to the anthranilate binding site. Mg(2+)-binding residues include Asp228 and Glu229.

It belongs to the anthranilate phosphoribosyltransferase family. In terms of assembly, homodimer. Mg(2+) serves as cofactor.

It catalyses the reaction N-(5-phospho-beta-D-ribosyl)anthranilate + diphosphate = 5-phospho-alpha-D-ribose 1-diphosphate + anthranilate. The protein operates within amino-acid biosynthesis; L-tryptophan biosynthesis; L-tryptophan from chorismate: step 2/5. Catalyzes the transfer of the phosphoribosyl group of 5-phosphorylribose-1-pyrophosphate (PRPP) to anthranilate to yield N-(5'-phosphoribosyl)-anthranilate (PRA). In Aquifex aeolicus (strain VF5), this protein is Anthranilate phosphoribosyltransferase.